We begin with the raw amino-acid sequence, 519 residues long: Laccase-2 (519 aa).

Residues 1-20 form the signal peptide; sequence MGLQRFSFFVTLALVARSLA. 2 consecutive Plastocyanin-like domains span residues 22–147 and 159–301; these read IGPV…FVVY and VDNE…ILRY. The N-linked (GlcNAc...) asparagine glycan is linked to asparagine 74. Positions 84, 86, 129, and 131 each coordinate Cu cation. Intrachain disulfides connect cysteine 105-cysteine 508 and cysteine 137-cysteine 225. N-linked (GlcNAc...) asparagine glycosylation is found at asparagine 161, asparagine 228, asparagine 237, asparagine 271, asparagine 353, and asparagine 361. In terms of domain architecture, Plastocyanin-like 3 spans 368 to 490; it reads TVPVLLQILS…AGFAIVFAED (123 aa). The Cu cation site is built by histidine 415, histidine 418, and histidine 420. An N-linked (GlcNAc...) asparagine glycan is attached at asparagine 456. Cu cation is bound by residues histidine 472, cysteine 473, histidine 474, and histidine 478.

It belongs to the multicopper oxidase family. The cofactor is Cu cation.

Its subcellular location is the secreted. The catalysed reaction is 4 hydroquinone + O2 = 4 benzosemiquinone + 2 H2O. Its function is as follows. Lignin degradation and detoxification of lignin-derived products. The polypeptide is Laccase-2 (LCC2) (Trametes versicolor (White-rot fungus)).